Reading from the N-terminus, the 558-residue chain is D-xylose-proton symporter-like 3, chloroplastic (558 aa).

A chloroplast-targeting transit peptide spans 1-31; that stretch reads MAFAVSVQSHFAIRALKRDHFKNPSPRTFCS. Helical transmembrane passes span 98–118, 146–166, 175–195, 197–217, 238–258, 264–284, 359–379, 400–420, 426–446, 449–469, 491–511, and 522–542; these read VILPFIFPALGGLLFGYDIGA, LVVSGSLYGALLGSISVYGVA, LIIAAVLYLLGSLITGCAPDL, ILLVGRLLYGFGIGLAMHGAP, LFIVLGILLGFSVGSFQIDVV, MYGFGTPVALLMGLGMWSLPA, ALTIGGGLVLFQQITGQPSVL, VSVIIGVFKLLMTWVAVAKVD, PLLIGGVSGIALSLFLLSAYY, LGGFPLVAVGALLLYVGCYQI, GISLAVLTNFGSNAIVTFAFS, and LFLLFGGIALVSLLFVILVVP.

It belongs to the major facilitator superfamily. Sugar transporter (TC 2.A.1.1) family.

The protein resides in the plastid. The protein localises to the chloroplast membrane. The chain is D-xylose-proton symporter-like 3, chloroplastic from Arabidopsis thaliana (Mouse-ear cress).